Here is a 93-residue protein sequence, read N- to C-terminus: Large ribosomal subunit protein uL23 (93 aa).

This sequence belongs to the universal ribosomal protein uL23 family. As to quaternary structure, part of the 50S ribosomal subunit. Contacts protein L29, and trigger factor when it is bound to the ribosome.

Functionally, one of the early assembly proteins it binds 23S rRNA. One of the proteins that surrounds the polypeptide exit tunnel on the outside of the ribosome. Forms the main docking site for trigger factor binding to the ribosome. The chain is Large ribosomal subunit protein uL23 from Nitratiruptor sp. (strain SB155-2).